The chain runs to 490 residues: Betaine aldehyde dehydrogenase (490 aa).

K(+)-binding residues include T26, I27, and D93. 150-152 (GAW) is an NAD(+) binding site. K162 acts as the Charge relay system in catalysis. Residue 176 to 179 (KPSE) participates in NAD(+) binding. V180 lines the K(+) pocket. 230-233 (GVAS) is a binding site for NAD(+). Residue L246 participates in K(+) binding. E252 acts as the Proton acceptor in catalysis. NAD(+)-binding residues include G254, C286, and E387. The active-site Nucleophile is the C286. A Cysteine sulfenic acid (-SOH) modification is found at C286. 2 residues coordinate K(+): K457 and G460. Residue E464 is the Charge relay system of the active site.

Belongs to the aldehyde dehydrogenase family. As to quaternary structure, dimer of dimers. K(+) is required as a cofactor.

It catalyses the reaction betaine aldehyde + NAD(+) + H2O = glycine betaine + NADH + 2 H(+). The protein operates within amine and polyamine biosynthesis; betaine biosynthesis via choline pathway; betaine from betaine aldehyde: step 1/1. Involved in the biosynthesis of the osmoprotectant glycine betaine. Catalyzes the irreversible oxidation of betaine aldehyde to the corresponding acid. The protein is Betaine aldehyde dehydrogenase of Klebsiella pneumoniae (strain 342).